Consider the following 87-residue polypeptide: Phosphoribosyl-ATP pyrophosphatase (87 aa).

It belongs to the PRA-PH family.

The protein localises to the cytoplasm. It catalyses the reaction 1-(5-phospho-beta-D-ribosyl)-ATP + H2O = 1-(5-phospho-beta-D-ribosyl)-5'-AMP + diphosphate + H(+). It functions in the pathway amino-acid biosynthesis; L-histidine biosynthesis; L-histidine from 5-phospho-alpha-D-ribose 1-diphosphate: step 2/9. The polypeptide is Phosphoribosyl-ATP pyrophosphatase (Kocuria rhizophila (strain ATCC 9341 / DSM 348 / NBRC 103217 / DC2201)).